Reading from the N-terminus, the 79-residue chain is D-alanyl carrier protein (79 aa).

A Carrier domain is found at 1–77; sequence MDIKSEVLKI…KIIEGITELR (77 aa). An O-(pantetheine 4'-phosphoryl)serine modification is found at S35.

It belongs to the DltC family. Post-translationally, 4'-phosphopantetheine is transferred from CoA to a specific serine of apo-DCP.

It is found in the cytoplasm. The protein operates within cell wall biogenesis; lipoteichoic acid biosynthesis. Functionally, carrier protein involved in the D-alanylation of lipoteichoic acid (LTA). The loading of thioester-linked D-alanine onto DltC is catalyzed by D-alanine--D-alanyl carrier protein ligase DltA. The DltC-carried D-alanyl group is further transferred to cell membrane phosphatidylglycerol (PG) by forming an ester bond, probably catalyzed by DltD. D-alanylation of LTA plays an important role in modulating the properties of the cell wall in Gram-positive bacteria, influencing the net charge of the cell wall. In Streptococcus mutans serotype c (strain ATCC 700610 / UA159), this protein is D-alanyl carrier protein.